A 194-amino-acid chain; its full sequence is Protein LURP-one-related 10 (194 aa).

Belongs to the LOR family.

Functionally, might be related to the phospholipid scramblase and tubby-like superfamily of membrane tethered transcription factors. This chain is Protein LURP-one-related 10, found in Arabidopsis thaliana (Mouse-ear cress).